The sequence spans 247 residues: ATP synthase subunit a, chloroplastic (247 aa).

Helical transmembrane passes span 38-58, 95-115, 134-154, 199-219, and 220-240; these read QVLI…AIAV, VPFI…GALL, INTT…AGLT, LVVV…VMFL, and GLFT…AYIG.

The protein belongs to the ATPase A chain family. As to quaternary structure, F-type ATPases have 2 components, CF(1) - the catalytic core - and CF(0) - the membrane proton channel. CF(1) has five subunits: alpha(3), beta(3), gamma(1), delta(1), epsilon(1). CF(0) has four main subunits: a, b, b' and c.

Its subcellular location is the plastid. The protein resides in the chloroplast thylakoid membrane. In terms of biological role, key component of the proton channel; it plays a direct role in the translocation of protons across the membrane. The chain is ATP synthase subunit a, chloroplastic from Ceratophyllum demersum (Rigid hornwort).